Reading from the N-terminus, the 366-residue chain is 3-dehydroquinate synthase (366 aa).

Residues 73-78 (DGERAK), 107-111 (GVVGD), 131-132 (TT), lysine 144, and lysine 153 each bind NAD(+). Zn(2+) contacts are provided by glutamate 186, histidine 249, and histidine 266.

It belongs to the sugar phosphate cyclases superfamily. Dehydroquinate synthase family. The cofactor is Co(2+). Zn(2+) is required as a cofactor. It depends on NAD(+) as a cofactor.

It is found in the cytoplasm. It carries out the reaction 7-phospho-2-dehydro-3-deoxy-D-arabino-heptonate = 3-dehydroquinate + phosphate. The protein operates within metabolic intermediate biosynthesis; chorismate biosynthesis; chorismate from D-erythrose 4-phosphate and phosphoenolpyruvate: step 2/7. Its function is as follows. Catalyzes the conversion of 3-deoxy-D-arabino-heptulosonate 7-phosphate (DAHP) to dehydroquinate (DHQ). The protein is 3-dehydroquinate synthase of Koribacter versatilis (strain Ellin345).